Consider the following 102-residue polypeptide: Large ribosomal subunit protein bL21 (102 aa).

Residues 80–91 show a composition bias toward basic residues; sequence KNSKRKKGHRQP. Residues 80 to 102 are disordered; it reads KNSKRKKGHRQPYTKLTIDKINA.

Belongs to the bacterial ribosomal protein bL21 family. As to quaternary structure, part of the 50S ribosomal subunit. Contacts protein L20.

This protein binds to 23S rRNA in the presence of protein L20. The chain is Large ribosomal subunit protein bL21 from Staphylococcus aureus (strain Mu3 / ATCC 700698).